The sequence spans 309 residues: Probable 2,4-dienoyl-CoA reductase 3 [(3E)-enoyl-CoA-producing] (309 aa).

NADP(+)-binding positions include 32-37 (GGGTGI), arginine 57, and aspartate 83. Arginine 57 lines the substrate pocket. Substrate is bound by residues phenylalanine 116 and serine 124. Tyrosine 166 serves as the catalytic Proton acceptor. NADP(+) is bound by residues lysine 181 and 207–210 (PGPI). Arginine 218 contributes to the substrate binding site.

The protein belongs to the short-chain dehydrogenases/reductases (SDR) family. 2,4-dienoyl-CoA reductase subfamily.

It catalyses the reaction a (2E,4E)-dienoyl-CoA + NADPH + H(+) = a 4,5-saturated-(3E)-enoyl-CoA + NADP(+). It carries out the reaction a (2E,4Z)-dienoyl-CoA + NADPH + H(+) = a 4,5-saturated-(3E)-enoyl-CoA + NADP(+). Its function is as follows. Auxiliary enzyme of beta-oxidation. It participates in the metabolism of unsaturated fatty enoyl-CoA esters having double bonds in both even- and odd-numbered positions. Catalyzes the NADP-dependent reduction of 2,4-dienoyl-CoA to yield trans-3-enoyl-CoA. This is Probable 2,4-dienoyl-CoA reductase 3 [(3E)-enoyl-CoA-producing] from Caenorhabditis elegans.